We begin with the raw amino-acid sequence, 205 residues long: Large ribosomal subunit protein uL4 (205 aa).

A disordered region spans residues 43–96 (GKRQGTSKVKNRSAVRGGGKKPWRQKGTGRARQGSIRSPQWRGGGTVFGPTPRS). The span at 51-71 (VKNRSAVRGGGKKPWRQKGTG) shows a compositional bias: basic residues.

Belongs to the universal ribosomal protein uL4 family. As to quaternary structure, part of the 50S ribosomal subunit.

In terms of biological role, one of the primary rRNA binding proteins, this protein initially binds near the 5'-end of the 23S rRNA. It is important during the early stages of 50S assembly. It makes multiple contacts with different domains of the 23S rRNA in the assembled 50S subunit and ribosome. Its function is as follows. Forms part of the polypeptide exit tunnel. The sequence is that of Large ribosomal subunit protein uL4 from Lactobacillus helveticus (strain DPC 4571).